Reading from the N-terminus, the 432-residue chain is Trigger factor (432 aa).

The region spanning 165 to 250 (GDFAKIDFEG…LKEIQVKAPQ (86 aa)) is the PPIase FKBP-type domain.

The protein belongs to the FKBP-type PPIase family. Tig subfamily.

The protein resides in the cytoplasm. The catalysed reaction is [protein]-peptidylproline (omega=180) = [protein]-peptidylproline (omega=0). Involved in protein export. Acts as a chaperone by maintaining the newly synthesized protein in an open conformation. Functions as a peptidyl-prolyl cis-trans isomerase. The sequence is that of Trigger factor from Wolinella succinogenes (strain ATCC 29543 / DSM 1740 / CCUG 13145 / JCM 31913 / LMG 7466 / NCTC 11488 / FDC 602W) (Vibrio succinogenes).